The chain runs to 382 residues: 1-deoxy-D-xylulose 5-phosphate reductoisomerase (382 aa).

Threonine 10, glycine 11, serine 12, isoleucine 13, glycine 36, and asparagine 122 together coordinate NADPH. Lysine 123 lines the 1-deoxy-D-xylulose 5-phosphate pocket. Residue glutamate 124 coordinates NADPH. Aspartate 148 contributes to the Mn(2+) binding site. The 1-deoxy-D-xylulose 5-phosphate site is built by serine 149, glutamate 150, serine 174, and histidine 197. Mn(2+) is bound at residue glutamate 150. Glycine 203 contributes to the NADPH binding site. Residues serine 210, asparagine 215, lysine 216, and glutamate 219 each contribute to the 1-deoxy-D-xylulose 5-phosphate site. Glutamate 219 is a Mn(2+) binding site.

Belongs to the DXR family. It depends on Mg(2+) as a cofactor. Mn(2+) is required as a cofactor.

The catalysed reaction is 2-C-methyl-D-erythritol 4-phosphate + NADP(+) = 1-deoxy-D-xylulose 5-phosphate + NADPH + H(+). The protein operates within isoprenoid biosynthesis; isopentenyl diphosphate biosynthesis via DXP pathway; isopentenyl diphosphate from 1-deoxy-D-xylulose 5-phosphate: step 1/6. In terms of biological role, catalyzes the NADPH-dependent rearrangement and reduction of 1-deoxy-D-xylulose-5-phosphate (DXP) to 2-C-methyl-D-erythritol 4-phosphate (MEP). The polypeptide is 1-deoxy-D-xylulose 5-phosphate reductoisomerase (Chlorobium limicola (strain DSM 245 / NBRC 103803 / 6330)).